Reading from the N-terminus, the 557-residue chain is Hydroxylamine reductase (557 aa).

Positions 3, 6, 19, and 26 each coordinate [4Fe-4S] cluster. 8 residues coordinate hybrid [4Fe-2O-2S] cluster: histidine 253, glutamate 277, cysteine 321, cysteine 408, cysteine 436, cysteine 461, glutamate 495, and lysine 497. Residue cysteine 408 is modified to Cysteine persulfide.

It belongs to the HCP family. [4Fe-4S] cluster is required as a cofactor. Hybrid [4Fe-2O-2S] cluster serves as cofactor.

It is found in the cytoplasm. It catalyses the reaction A + NH4(+) + H2O = hydroxylamine + AH2 + H(+). In terms of biological role, catalyzes the reduction of hydroxylamine to form NH(3) and H(2)O. The protein is Hydroxylamine reductase of Acidiphilium cryptum (strain JF-5).